Reading from the N-terminus, the 64-residue chain is MTTEITTVKCPTCKQAVVWDETSIYRPFCSKRCQLIDLGEWADEEKRIPSDDMVSDSEDWSETR.

Positions 10, 13, 29, and 33 each coordinate Zn(2+).

Belongs to the DNA gyrase inhibitor YacG family. As to quaternary structure, interacts with GyrB. Zn(2+) serves as cofactor.

Functionally, inhibits all the catalytic activities of DNA gyrase by preventing its interaction with DNA. Acts by binding directly to the C-terminal domain of GyrB, which probably disrupts DNA binding by the gyrase. This Pectobacterium carotovorum subsp. carotovorum (strain PC1) protein is DNA gyrase inhibitor YacG.